The primary structure comprises 707 residues: D-(-)-3-hydroxybutyrate oligomer hydrolase (707 aa).

The N-terminal stretch at 1-24 (MHHDNFRRLGNAAFAAAAALLAVA) is a signal peptide. Ser311 acts as the Charge relay system in catalysis.

The protein belongs to the D-(-)-3-hydroxybutyrate oligomer hydrolase family.

Its subcellular location is the secreted. It carries out the reaction (3R)-hydroxybutanoate dimer + H2O = 2 (R)-3-hydroxybutanoate + H(+). Its pathway is lipid metabolism; butanoate metabolism. Participates in the degradation of poly-3-hydroxybutyrate (PHB). It works downstream of poly(3-hydroxybutyrate) depolymerase, hydrolyzing D(-)-3-hydroxybutyrate oligomers of various length (3HB-oligomers) into 3HB-monomers. The polypeptide is D-(-)-3-hydroxybutyrate oligomer hydrolase (Cupriavidus pinatubonensis (strain JMP 134 / LMG 1197) (Cupriavidus necator (strain JMP 134))).